We begin with the raw amino-acid sequence, 420 residues long: uncharacterized protein (420 aa).

Belongs to the asfivirus K421R family.

Its subcellular location is the virion. This is an uncharacterized protein from Ornithodoros (relapsing fever ticks).